Reading from the N-terminus, the 188-residue chain is MRVMGVDPGLTRCGLSVVESGRGRTVVALDVDVVRTPSDAPLAERLLSISDAVEHWLATHQPDVVAIERVFSQLNVTTVMGTAQAGGVVALAAAKRGIGVHFHTPSEVKAAVTGNGAANKAQVTAMVTRILALQAKPTPADAADALALAICHCWRAPMIARMARAEALAAQQRQKYKDKVDATLRAAR.

Active-site residues include aspartate 7, glutamate 68, and aspartate 141. Mg(2+) contacts are provided by aspartate 7, glutamate 68, and aspartate 141.

This sequence belongs to the RuvC family. Homodimer which binds Holliday junction (HJ) DNA. The HJ becomes 2-fold symmetrical on binding to RuvC with unstacked arms; it has a different conformation from HJ DNA in complex with RuvA. In the full resolvosome a probable DNA-RuvA(4)-RuvB(12)-RuvC(2) complex forms which resolves the HJ. Mg(2+) is required as a cofactor.

It is found in the cytoplasm. The catalysed reaction is Endonucleolytic cleavage at a junction such as a reciprocal single-stranded crossover between two homologous DNA duplexes (Holliday junction).. Functionally, the RuvA-RuvB-RuvC complex processes Holliday junction (HJ) DNA during genetic recombination and DNA repair. Endonuclease that resolves HJ intermediates. Cleaves cruciform DNA by making single-stranded nicks across the HJ at symmetrical positions within the homologous arms, yielding a 5'-phosphate and a 3'-hydroxyl group; requires a central core of homology in the junction. The consensus cleavage sequence is 5'-(A/T)TT(C/G)-3'. Cleavage occurs on the 3'-side of the TT dinucleotide at the point of strand exchange. HJ branch migration catalyzed by RuvA-RuvB allows RuvC to scan DNA until it finds its consensus sequence, where it cleaves and resolves the cruciform DNA. In Mycobacterium avium (strain 104), this protein is Crossover junction endodeoxyribonuclease RuvC.